The sequence spans 269 residues: Basic leucine zipper 19 (269 aa).

Positions 140-196 (DPKRVKRILANRQSAQRSRVRKLQYISELERSVTTLQMEVSALSPRVAFLDHQRSLL) constitute a bZIP domain. The basic motif stretch occupies residues 142 to 161 (KRVKRILANRQSAQRSRVRK). The tract at residues 168–196 (LERSVTTLQMEVSALSPRVAFLDHQRSLL) is leucine-zipper.

Expressed in roots and shoots.

Its subcellular location is the nucleus. Transcription regulator. This Oryza sativa subsp. japonica (Rice) protein is Basic leucine zipper 19 (BZIP19).